The sequence spans 185 residues: Photosystem I assembly protein Ycf4 (185 aa).

A run of 2 helical transmembrane segments spans residues 24-44 (YLIG…SISS) and 66-86 (IIMG…WYLV).

It belongs to the Ycf4 family.

It localises to the cellular thylakoid membrane. Its function is as follows. Seems to be required for the assembly of the photosystem I complex. The polypeptide is Photosystem I assembly protein Ycf4 (Prochlorococcus marinus (strain MIT 9515)).